Reading from the N-terminus, the 2195-residue chain is Activating signal cointegrator 1 complex subunit 3 (2195 aa).

Residues 31 to 88 (EQVVARNKEIMKKRNEKKKEKDRIIEKGQLTWSYFSDSKQNKEKEKENRQIFNKFKEI) adopt a coiled-coil conformation. The span at 367-378 (QLKKDDKKRYKN) shows a compositional bias: basic and acidic residues. The segment at 367 to 387 (QLKKDDKKRYKNDQQQQQQQQ) is disordered. Positions 492–675 (ESAYKSNENI…FIRAPASGTH (184 aa)) constitute a Helicase ATP-binding 1 domain. 505-512 (APTGAGKT) contributes to the ATP binding site. The short motif at 617 to 620 (DEIH) is the DEAH box element. Residues 705-920 (NMNQLCYERL…NVNEAVNWLS (216 aa)) enclose the Helicase C-terminal 1 domain. Residues 980–1286 (MTELGRIASH…GSEGIREISF (307 aa)) enclose the SEC63 1 domain. Residues 1336–1511 (HTLYYTNNNV…WMGIDRVGLF (176 aa)) form the Helicase ATP-binding 2 domain. 1349–1356 (SPTGSGKT) serves as a coordination point for ATP. Positions 1453–1456 (DEIH) match the DEAH box motif. The Helicase C-terminal 2 domain occupies 1545 to 1750 (SFAAIATYSP…GTIQSKQGAI (206 aa)). Positions 1810–1969 (PMSMGKIASF…LPHINKDFAD (160 aa)) constitute an SEC63 2 domain. A compositionally biased stretch (low complexity) spans 2032 to 2062 (TNNNSNNNDDNNNENNNNNNKKNNNNNNNNN). Residues 2032–2064 (TNNNSNNNDDNNNENNNNNNKKNNNNNNNNNKS) form a disordered region.

It belongs to the helicase family.

It localises to the nucleus. The protein resides in the cytoplasm. It is found in the cytosol. The catalysed reaction is Couples ATP hydrolysis with the unwinding of duplex DNA by translocating in the 3'-5' direction.. It carries out the reaction ATP + H2O = ADP + phosphate + H(+). In terms of biological role, ATPase involved both in DNA repair and rescue of stalled ribosomes. This Dictyostelium discoideum (Social amoeba) protein is Activating signal cointegrator 1 complex subunit 3 (ascc3).